We begin with the raw amino-acid sequence, 128 residues long: Large ribosomal subunit protein bL17 (128 aa).

It belongs to the bacterial ribosomal protein bL17 family. Part of the 50S ribosomal subunit. Contacts protein L32.

The polypeptide is Large ribosomal subunit protein bL17 (Ehrlichia ruminantium (strain Gardel)).